The following is a 184-amino-acid chain: UPF0316 protein BPUM_0594 (184 aa).

The next 3 helical transmembrane spans lie at alanine 9–methionine 29, alanine 41–leucine 61, and isoleucine 67–isoleucine 87.

The protein belongs to the UPF0316 family.

The protein localises to the cell membrane. This is UPF0316 protein BPUM_0594 from Bacillus pumilus (strain SAFR-032).